Consider the following 144-residue polypeptide: Large ribosomal subunit protein uL13 (144 aa).

It belongs to the universal ribosomal protein uL13 family. As to quaternary structure, part of the 50S ribosomal subunit.

Functionally, this protein is one of the early assembly proteins of the 50S ribosomal subunit, although it is not seen to bind rRNA by itself. It is important during the early stages of 50S assembly. The sequence is that of Large ribosomal subunit protein uL13 from Syntrophomonas wolfei subsp. wolfei (strain DSM 2245B / Goettingen).